The primary structure comprises 91 residues: Small ribosomal subunit protein bS20 (91 aa).

The segment at 1 to 28 (MANTASAEKRNRQAQKRRARNVQVRTGV) is disordered.

This sequence belongs to the bacterial ribosomal protein bS20 family.

Its function is as follows. Binds directly to 16S ribosomal RNA. The protein is Small ribosomal subunit protein bS20 of Anaeromyxobacter dehalogenans (strain 2CP-1 / ATCC BAA-258).